The following is a 157-amino-acid chain: SsrA-binding protein (157 aa).

The protein belongs to the SmpB family.

It localises to the cytoplasm. Its function is as follows. Required for rescue of stalled ribosomes mediated by trans-translation. Binds to transfer-messenger RNA (tmRNA), required for stable association of tmRNA with ribosomes. tmRNA and SmpB together mimic tRNA shape, replacing the anticodon stem-loop with SmpB. tmRNA is encoded by the ssrA gene; the 2 termini fold to resemble tRNA(Ala) and it encodes a 'tag peptide', a short internal open reading frame. During trans-translation Ala-aminoacylated tmRNA acts like a tRNA, entering the A-site of stalled ribosomes, displacing the stalled mRNA. The ribosome then switches to translate the ORF on the tmRNA; the nascent peptide is terminated with the 'tag peptide' encoded by the tmRNA and targeted for degradation. The ribosome is freed to recommence translation, which seems to be the essential function of trans-translation. The sequence is that of SsrA-binding protein from Bacillus licheniformis (strain ATCC 14580 / DSM 13 / JCM 2505 / CCUG 7422 / NBRC 12200 / NCIMB 9375 / NCTC 10341 / NRRL NRS-1264 / Gibson 46).